A 461-amino-acid chain; its full sequence is Protein DVR-1 homolog (461 aa).

Residues 1-30 (MEYSRKTYLDLNIMAKYILILSLFFGPGLS) form the signal peptide. Positions 31-338 (WDVFYSGDED…QKKGGKRPRK (308 aa)) are excised as a propeptide. N-linked (GlcNAc...) asparagine glycosylation is present at Asn-149. Positions 317–351 (SHLRRNRRAATRQKKGGKRPRKPDTDNDIASRDSA) are disordered. The span at 318–337 (HLRRNRRAATRQKKGGKRPR) shows a compositional bias: basic residues. Residues 338–347 (KPDTDNDIAS) are compositionally biased toward basic and acidic residues. Disulfide bonds link Cys-360–Cys-426, Cys-389–Cys-458, and Cys-393–Cys-460. N-linked (GlcNAc...) asparagine glycosylation occurs at Asn-402.

This sequence belongs to the TGF-beta family. Homodimer; disulfide-linked.

Its subcellular location is the secreted. The sequence is that of Protein DVR-1 homolog (DVR1) from Strongylocentrotus purpuratus (Purple sea urchin).